The following is an 85-amino-acid chain: Cell division topological specificity factor (85 aa).

It belongs to the MinE family.

Prevents the cell division inhibition by proteins MinC and MinD at internal division sites while permitting inhibition at polar sites. This ensures cell division at the proper site by restricting the formation of a division septum at the midpoint of the long axis of the cell. The polypeptide is Cell division topological specificity factor (Thioalkalivibrio sulfidiphilus (strain HL-EbGR7)).